The chain runs to 359 residues: Phosphoserine aminotransferase (359 aa).

Residue Arg-41 coordinates L-glutamate. Residues 75 to 76 (AS), Trp-101, Thr-151, Asp-171, and Gln-194 contribute to the pyridoxal 5'-phosphate site. The residue at position 195 (Lys-195) is an N6-(pyridoxal phosphate)lysine. Position 236–237 (236–237 (NT)) interacts with pyridoxal 5'-phosphate.

It belongs to the class-V pyridoxal-phosphate-dependent aminotransferase family. SerC subfamily. As to quaternary structure, homodimer. Requires pyridoxal 5'-phosphate as cofactor.

It localises to the cytoplasm. The enzyme catalyses O-phospho-L-serine + 2-oxoglutarate = 3-phosphooxypyruvate + L-glutamate. It catalyses the reaction 4-(phosphooxy)-L-threonine + 2-oxoglutarate = (R)-3-hydroxy-2-oxo-4-phosphooxybutanoate + L-glutamate. It participates in amino-acid biosynthesis; L-serine biosynthesis; L-serine from 3-phospho-D-glycerate: step 2/3. Its pathway is cofactor biosynthesis; pyridoxine 5'-phosphate biosynthesis; pyridoxine 5'-phosphate from D-erythrose 4-phosphate: step 3/5. Its function is as follows. Catalyzes the reversible conversion of 3-phosphohydroxypyruvate to phosphoserine and of 3-hydroxy-2-oxo-4-phosphonooxybutanoate to phosphohydroxythreonine. The sequence is that of Phosphoserine aminotransferase from Thiobacillus denitrificans (strain ATCC 25259 / T1).